A 204-amino-acid chain; its full sequence is 3-isopropylmalate dehydratase small subunit (204 aa).

The protein belongs to the LeuD family. LeuD type 1 subfamily. Heterodimer of LeuC and LeuD.

The enzyme catalyses (2R,3S)-3-isopropylmalate = (2S)-2-isopropylmalate. The protein operates within amino-acid biosynthesis; L-leucine biosynthesis; L-leucine from 3-methyl-2-oxobutanoate: step 2/4. Functionally, catalyzes the isomerization between 2-isopropylmalate and 3-isopropylmalate, via the formation of 2-isopropylmaleate. This is 3-isopropylmalate dehydratase small subunit from Psychromonas ingrahamii (strain DSM 17664 / CCUG 51855 / 37).